A 480-amino-acid chain; its full sequence is O-acyltransferase ausP (480 aa).

Residues His-180 and Asp-412 each act as proton acceptor in the active site.

Belongs to the plant acyltransferase family. Monomer.

It participates in secondary metabolite biosynthesis; terpenoid biosynthesis. Functionally, O-acyltransferase; part of the gene cluster that mediates the biosynthesis of calidodehydroaustin, a fungal meroterpenoid. The first step of the pathway is the synthesis of 3,5-dimethylorsellinic acid by the polyketide synthase ausA. 3,5-dimethylorsellinic acid is then prenylated by the polyprenyl transferase ausN. Further epoxidation by the FAD-dependent monooxygenase ausM and cyclization by the probable terpene cyclase ausL lead to the formation of protoaustinoid A. Protoaustinoid A is then oxidized to spiro-lactone preaustinoid A3 by the combined action of the FAD-binding monooxygenases ausB and ausC, and the dioxygenase ausE. Acid-catalyzed keto-rearrangement and ring contraction of the tetraketide portion of preaustinoid A3 by ausJ lead to the formation of preaustinoid A4. The aldo-keto reductase ausK, with the help of ausH, is involved in the next step by transforming preaustinoid A4 into isoaustinone which is in turn hydroxylated by the P450 monooxygenase ausI to form austinolide. The cytochrome P450 monooxygenase ausG modifies austinolide to austinol. Austinol is further acetylated to austin by the O-acetyltransferase ausP, which spontaneously changes to dehydroaustin. The cytochrome P450 monooxygenase ausR then converts dehydroaustin is into 7-dehydrodehydroaustin. The hydroxylation catalyzed by ausR permits the O-acetyltransferase ausQ to add an additional acetyl group to the molecule, leading to the formation of acetoxydehydroaustin. The short chain dehydrogenase ausT catalyzes the reduction of the double bond present between carbon atoms 1 and 2 to convert 7-dehydrodehydroaustin into 1,2-dihydro-7-hydroxydehydroaustin. AusQ catalyzes not only an acetylation reaction but also the addition of the PKS ausV diketide product to 1,2-dihydro-7-hydroxydehydroaustin, forming precalidodehydroaustin. Finally, the iron/alpha-ketoglutarate-dependent dioxygenase converts precalidodehydroaustin into calidodehydroaustin. This is O-acyltransferase ausP from Aspergillus calidoustus.